A 231-amino-acid polypeptide reads, in one-letter code: PX domain-containing protein 1 (231 aa).

The region spanning 1 to 134 (MASAVFEGTS…TFFERSPLDQ (134 aa)) is the PX domain.

In Bos taurus (Bovine), this protein is PX domain-containing protein 1 (PXDC1).